A 145-amino-acid polypeptide reads, in one-letter code: Functional amyloid chaperone FapA (145 aa).

A signal peptide spans 1–27 (MRKRDKRLYHLLLVGCVLGSLSLTAQA).

Belongs to the FapA family. In terms of assembly, monomer in solution. Interacts with FapC but not FapB in vitro.

The protein localises to the periplasm. An intrinsically disordered chaperone for fibril amyloid FapC that guards against fibrillation, pro within the periplasm. Upon overexpression of the endogenous six-gene locus (fapA-fapF), cells form large clumps during liquid growth, make large amounts of biofilm and produce relatively unstable amyloid fibrils. The polypeptide is Functional amyloid chaperone FapA (Pseudomonas putida (strain ATCC 700007 / DSM 6899 / JCM 31910 / BCRC 17059 / LMG 24140 / F1)).